A 467-amino-acid polypeptide reads, in one-letter code: Septin-10 (467 aa).

The Septin-type G domain maps to 63–329; it reads QGFCFNILCV…ELYRRCKLEE (267 aa). The tract at residues 73 to 80 is G1 motif; the sequence is GETGIGKS. Residues 73–80, glycine 128, 209–217, glycine 263, and arginine 278 contribute to the GTP site; these read GETGIGKS and KADTVSKTE. The interval 125–128 is G3 motif; it reads NTVG. Residues 208 to 211 form a G4 motif region; it reads AKAD.

Belongs to the TRAFAC class TrmE-Era-EngA-EngB-Septin-like GTPase superfamily. Septin GTPase family. As to quaternary structure, septins polymerize into heterooligomeric protein complexes that form filaments, and can associate with cellular membranes, actin filaments and microtubules. GTPase activity is required for filament formation. Interacts with ADGB. In terms of processing, proteolytically cleaved in vitro in a calmodulin-dependent manner.

The protein localises to the cytoplasm. It localises to the cytoskeleton. The protein resides in the cell projection. It is found in the cilium. Its subcellular location is the flagellum. Filament-forming cytoskeletal GTPase. May play a role in cytokinesis (Potential). This Pongo abelii (Sumatran orangutan) protein is Septin-10.